Consider the following 322-residue polypeptide: MHLHSPSLMADGSFSLSGHLLRSPGGNPSRLHSIEAILGFVKEDSVLGSFQSEISPRNAKEVDKRSSRHCLHKMTEEIHPQQEHLEDGQTDGYGDPYLGKTSSECLSPGLSTSNSDNKLSDDEQQPKKKHRRNRTTFTTYQLHELERAFEKSHYPDVYSREELAMKVNLPEVRVQVWFQNRRAKWRRQEKLEVTSMKLQDSPMLSFNRSPQPSAMSALSSSLPLDSWLTPTLSNSTALQSLPGFVTTPPSLPGSYTPPPFINPVSVGHALQPLGAMGPPPPYQCGANFVDKYPLEETDPRNNSIASLRMKAKEHIQFIGKPW.

The Octapeptide motif signature appears at histidine 32 to glycine 39. Residues threonine 75 to aspartate 87 show a composition bias toward basic and acidic residues. The disordered stretch occupies residues threonine 75–threonine 136. Residues lysine 100–asparagine 117 show a composition bias toward polar residues. The segment at residues histidine 130 to glutamate 189 is a DNA-binding region (homeobox). The OAR signature appears at asparagine 302–isoleucine 315. The short motif at arginine 308–lysine 312 is the Nuclear localization signal element.

Belongs to the paired homeobox family. Bicoid subfamily. Highly expressed in anterior neural plate followed by neural retina, pigmented epithelium, in pineal gland, diencephalon floor and epiphysis. At later stages, the neuroretina remains the primary site of expression. No expression in the developing lens and cornea.

The protein resides in the nucleus. In terms of biological role, plays a critical role in eye formation by regulating the initial specification of retinal cells and/or their subsequent proliferation. The protein is Retinal homeobox protein Rx-A (rax-a) of Xenopus laevis (African clawed frog).